The chain runs to 707 residues: Kinesin-like protein KIN-13B (707 aa).

The Kinesin motor domain occupies 152–477 (KIKVVVRKRP…LRYADRVKSL (326 aa)). 243–250 (GQTGSGKT) provides a ligand contact to ATP. A coiled-coil region spans residues 619–656 (EHLNELLQEEEDLVSAHRKQVEETLDMIKEEMNLLVEA).

Belongs to the TRAFAC class myosin-kinesin ATPase superfamily. Kinesin family. KIN-13 subfamily.

This is Kinesin-like protein KIN-13B from Oryza sativa subsp. japonica (Rice).